A 268-amino-acid polypeptide reads, in one-letter code: Glucosamine-6-phosphate deaminase (268 aa).

The active-site Proton acceptor; for enolization step is Asp-72. The active-site For ring-opening step is the Asp-141. His-143 functions as the Proton acceptor; for ring-opening step in the catalytic mechanism. Glu-148 (for ring-opening step) is an active-site residue.

This sequence belongs to the glucosamine/galactosamine-6-phosphate isomerase family. NagB subfamily.

It carries out the reaction alpha-D-glucosamine 6-phosphate + H2O = beta-D-fructose 6-phosphate + NH4(+). Its pathway is amino-sugar metabolism; N-acetylneuraminate degradation; D-fructose 6-phosphate from N-acetylneuraminate: step 5/5. Allosterically activated by N-acetylglucosamine 6-phosphate (GlcNAc6P). Catalyzes the reversible isomerization-deamination of glucosamine 6-phosphate (GlcN6P) to form fructose 6-phosphate (Fru6P) and ammonium ion. In Borreliella afzelii (strain PKo) (Borrelia afzelii), this protein is Glucosamine-6-phosphate deaminase.